A 161-amino-acid chain; its full sequence is SsrA-binding protein (161 aa).

Belongs to the SmpB family.

Its subcellular location is the cytoplasm. Its function is as follows. Required for rescue of stalled ribosomes mediated by trans-translation. Binds to transfer-messenger RNA (tmRNA), required for stable association of tmRNA with ribosomes. tmRNA and SmpB together mimic tRNA shape, replacing the anticodon stem-loop with SmpB. tmRNA is encoded by the ssrA gene; the 2 termini fold to resemble tRNA(Ala) and it encodes a 'tag peptide', a short internal open reading frame. During trans-translation Ala-aminoacylated tmRNA acts like a tRNA, entering the A-site of stalled ribosomes, displacing the stalled mRNA. The ribosome then switches to translate the ORF on the tmRNA; the nascent peptide is terminated with the 'tag peptide' encoded by the tmRNA and targeted for degradation. The ribosome is freed to recommence translation, which seems to be the essential function of trans-translation. The protein is SsrA-binding protein of Vibrio parahaemolyticus serotype O3:K6 (strain RIMD 2210633).